A 314-amino-acid chain; its full sequence is MALAARLWRFLPFRRGAAPGSLLSAGTSGSRGHCGPCRLRGFEVMGNPGTFKRGLLLSALSYLGFETYQVISQAAVVHATAKVEEILEQADYLCESGETEKLYQLLTQYKESEDAELLWRLARASRDVAQLSRTSEEEKKLLVYEALEYAKRALEKNESSFAAHKWYAICLSDVGDYEGIKAKIANAYIIKEHFEKAIELNPKDATSIHLMGIWCYTFAEMPWYQRRIAKMLFATPPSSTYEKALSYFHRAEQVDPNFYSKNLLLLGKTYLKLHNKKLAAFWLMKAKDYPAHTEEDKQIQTEAAQLLTSFSEKN.

An N6-succinyllysine modification is found at Lys-165. TPR repeat units follow at residues 168–204 (AICL…NPKD) and 222–258 (PWYQ…DPNF).

It belongs to the RMDN family. Interacts with microtubules.

It localises to the cytoplasm. Its subcellular location is the cytoskeleton. The protein resides in the spindle. It is found in the spindle pole. In Pongo abelii (Sumatran orangutan), this protein is Regulator of microtubule dynamics protein 1 (RMDN1).